Here is a 404-residue protein sequence, read N- to C-terminus: Mitochondrial potassium channel (404 aa).

A mitochondrion-targeting transit peptide spans M1 to T30. Residues L31–K196 lie on the Mitochondrial matrix side of the membrane. S65 carries the post-translational modification Phosphoserine. Positions V111 to D138 form a coiled coil. A helical transmembrane segment spans residues N197 to V217. The Mitochondrial intermembrane segment spans residues N218–V380. A helical transmembrane segment spans residues Y381–F401. Residues R402–S404 are Mitochondrial matrix-facing.

The mitochondrial potassium channel (mitoK(ATP)) forms a heteromultimer.

The protein localises to the mitochondrion inner membrane. It catalyses the reaction K(+)(in) = K(+)(out). Channel activity inhibited by ATP via ABCB8/MITOSUR subunit. Its function is as follows. Pore-forming subunit of the mitochondrial ATP-gated potassium channel (mitoK(ATP)). Together with ATP-binding subunit ABCB8/MITOSUR of the mitoK(ATP) channel, mediates ATP-dependent K(+) currents across the mitochondrial inner membrane. An increase in ATP intracellular levels closes the channel, inhibiting K(+) transport, whereas a decrease in ATP levels enhances K(+) uptake in the mitochondrial matrix. May contribute to the homeostatic control of cellular metabolism under stress conditions by regulating the mitochondrial matrix volume. This chain is Mitochondrial potassium channel, found in Bos taurus (Bovine).